A 323-amino-acid chain; its full sequence is tRNA U34 carboxymethyltransferase (323 aa).

Carboxy-S-adenosyl-L-methionine-binding positions include K91, W105, K110, G130, 152–154 (DPT), 181–182 (IE), M196, Y200, and R315.

It belongs to the class I-like SAM-binding methyltransferase superfamily. CmoB family. Homotetramer.

It carries out the reaction carboxy-S-adenosyl-L-methionine + 5-hydroxyuridine(34) in tRNA = 5-carboxymethoxyuridine(34) in tRNA + S-adenosyl-L-homocysteine + H(+). Functionally, catalyzes carboxymethyl transfer from carboxy-S-adenosyl-L-methionine (Cx-SAM) to 5-hydroxyuridine (ho5U) to form 5-carboxymethoxyuridine (cmo5U) at position 34 in tRNAs. The protein is tRNA U34 carboxymethyltransferase of Escherichia fergusonii (strain ATCC 35469 / DSM 13698 / CCUG 18766 / IAM 14443 / JCM 21226 / LMG 7866 / NBRC 102419 / NCTC 12128 / CDC 0568-73).